Consider the following 588-residue polypeptide: MKAAAKTQKPKRQEEHANFISWRFALLCGCILLALAFLLGRVAWLQVISPDMLVKEGDMRSLRVQQVSTSRGMITDRSGRPLAVSVPVKAIWADPKEVHDAGGISVGDRWKALANALNIPLDQLSARINANPKGRFIYLARQVNPDMADYIKKLKLPGIHLREESRRYYPSGEVTAHLIGFTNVDSQGIEGVEKSFDKWLTGQPGERIVRKDRYGRVIEDISSTDSQAAHNLALSIDERLQALVYRELNNAVAFNKAESGSAVLVDVNTGEVLAMANSPSYNPNNLSGTPKEAMRNRTITDVFEPGSTVKPMVVMTALQRGVVRENSVLNTIPYRINGHEIKDVARYSELTLTGVLQKSSNVGVSKLALAMPSSALVDTYSRFGLGKATNLGLVGERSGLYPQKQRWSDIERATFSFGYGLMVTPLQLARVYATIGSYGIYRPLSITKVDPPVPGERVFPESIVRTVVHMMESVALPGGGGVKAAIKGYRIAIKTGTAKKVGPDGRYINKYIAYTAGVAPASQPRFALVVVINDPQAGKYYGGAVSAPVFGAIMGGVLRTMNIEPDALTTGDKNEFVINQGEGTGGRS.

A helical transmembrane segment spans residues 19 to 39 (FISWRFALLCGCILLALAFLL). The Acyl-ester intermediate role is filled by serine 307. A propeptide spanning residues 578–588 (INQGEGTGGRS) is cleaved from the precursor.

It belongs to the transpeptidase family. FtsI subfamily.

The protein resides in the cell inner membrane. It catalyses the reaction Preferential cleavage: (Ac)2-L-Lys-D-Ala-|-D-Ala. Also transpeptidation of peptidyl-alanyl moieties that are N-acyl substituents of D-alanine.. The protein operates within cell wall biogenesis; peptidoglycan biosynthesis. In terms of biological role, catalyzes cross-linking of the peptidoglycan cell wall at the division septum. In Escherichia coli O157:H7, this protein is Peptidoglycan D,D-transpeptidase FtsI.